Here is a 330-residue protein sequence, read N- to C-terminus: tRNA (guanine(37)-N(1))-methyltransferase Trm5b (330 aa).

S-adenosyl-L-methionine contacts are provided by residues arginine 173, 211–212 (DI), 238–239 (DS), and asparagine 252.

This sequence belongs to the class I-like SAM-binding methyltransferase superfamily. TRM5/TYW2 family.

Its subcellular location is the cytoplasm. It catalyses the reaction guanosine(37) in tRNA + S-adenosyl-L-methionine = N(1)-methylguanosine(37) in tRNA + S-adenosyl-L-homocysteine + H(+). In terms of biological role, specifically methylates the N1 position of guanosine-37 in various tRNAs. The chain is tRNA (guanine(37)-N(1))-methyltransferase Trm5b from Pyrococcus abyssi (strain GE5 / Orsay).